A 231-amino-acid polypeptide reads, in one-letter code: Uracil-DNA glycosylase (231 aa).

The active-site Proton acceptor is the aspartate 71.

It belongs to the uracil-DNA glycosylase (UDG) superfamily. UNG family.

The protein resides in the cytoplasm. The enzyme catalyses Hydrolyzes single-stranded DNA or mismatched double-stranded DNA and polynucleotides, releasing free uracil.. Its function is as follows. Excises uracil residues from the DNA which can arise as a result of misincorporation of dUMP residues by DNA polymerase or due to deamination of cytosine. This Pseudomonas aeruginosa (strain UCBPP-PA14) protein is Uracil-DNA glycosylase.